The sequence spans 726 residues: Phenylalanine--tRNA ligase beta subunit (726 aa).

Residues 38 to 150 (FSSSKGLLFA…NFASLNDDAS (113 aa)) form the tRNA-binding domain. The B5 domain occupies 394-467 (DKKVEINFDE…RFYNYDNFKE (74 aa)). Mg(2+)-binding residues include D445, D451, E454, and E455.

Belongs to the phenylalanyl-tRNA synthetase beta subunit family. Type 1 subfamily. In terms of assembly, tetramer of two alpha and two beta subunits. Mg(2+) is required as a cofactor.

Its subcellular location is the cytoplasm. It catalyses the reaction tRNA(Phe) + L-phenylalanine + ATP = L-phenylalanyl-tRNA(Phe) + AMP + diphosphate + H(+). The chain is Phenylalanine--tRNA ligase beta subunit from Mycoplasmopsis synoviae (strain 53) (Mycoplasma synoviae).